The chain runs to 644 residues: uncharacterized protein (644 aa).

The interval 1–35 (MKANGLDNDPARTGMERTDIDSEHPEAQPLLNNNH) is disordered. Residues 1 to 90 (MKANGLDNDP…ILNILILINT (90 aa)) are Cytoplasmic-facing. Basic and acidic residues predominate over residues 14–26 (GMERTDIDSEHPE). Phosphoserine is present on residues Ser22, Ser56, and Ser63. Residues 91-111 (IWLVTTLISDFFFNINILFGF) form a helical membrane-spanning segment. The Vacuolar segment spans residues 112–122 (SNRYASFNDLT). The chain crosses the membrane as a helical span at residues 123 to 143 (LIFISIIANSFNLWFNKLGLY). The Cytoplasmic segment spans residues 144–147 (SALD). Residues 148–168 (YSLNVTLCVLTLFNLALTYLI) form a helical membrane-spanning segment. Residues 169–174 (KYTRQR) lie on the Vacuolar side of the membrane. The helical transmembrane segment at 175 to 195 (IGFVGTFTYLWTSFSFFIGAI) threads the bilayer. The Cytoplasmic portion of the chain corresponds to 196–271 (LDWYLLFYNN…EWVSIGFRNT (76 aa)). The interval 225-251 (NENHTNSTENRDRSQYGSGSPTPTHRS) is disordered. Residues 239 to 251 (QYGSGSPTPTHRS) show a composition bias toward polar residues. A Phosphoserine modification is found at Ser244. Residues 272-292 (IKFLILIFFALFTLNTLLTTL) form a helical membrane-spanning segment. Over 293-644 (DTYRLTHKLP…IGELGKLTED (352 aa)) the chain is Vacuolar. An AB hydrolase-1 domain is found at 348–619 (PIILFEHGGY…IVEGGHEIYK (272 aa)). Residues 469 to 492 (GRGDGDDGDDGNGNDGDGRNHDKT) are disordered.

Its subcellular location is the vacuole membrane. This is an uncharacterized protein from Saccharomyces cerevisiae (strain ATCC 204508 / S288c) (Baker's yeast).